We begin with the raw amino-acid sequence, 682 residues long: UvrABC system protein B (682 aa).

Residues 27–414 (DNIRAGVAHQ…SEGIVVEQII (388 aa)) enclose the Helicase ATP-binding domain. 40-47 (GVTGSGKT) contributes to the ATP binding site. The Beta-hairpin signature appears at 93–116 (YYDYYQPEAYVPTSDTYIEKDSSI). Positions 432–594 (QMEDLMTECR…IEPVSVRKSL (163 aa)) constitute a Helicase C-terminal domain. Residues 609-628 (AAKGRGKGRGRQAAPAQTAA) are disordered. The 36-residue stretch at 642-677 (GGLIQRLEREMRESARDLEFEKAAELRDRIRMLRER) folds into the UVR domain.

It belongs to the UvrB family. As to quaternary structure, forms a heterotetramer with UvrA during the search for lesions. Interacts with UvrC in an incision complex.

The protein localises to the cytoplasm. Its function is as follows. The UvrABC repair system catalyzes the recognition and processing of DNA lesions. A damage recognition complex composed of 2 UvrA and 2 UvrB subunits scans DNA for abnormalities. Upon binding of the UvrA(2)B(2) complex to a putative damaged site, the DNA wraps around one UvrB monomer. DNA wrap is dependent on ATP binding by UvrB and probably causes local melting of the DNA helix, facilitating insertion of UvrB beta-hairpin between the DNA strands. Then UvrB probes one DNA strand for the presence of a lesion. If a lesion is found the UvrA subunits dissociate and the UvrB-DNA preincision complex is formed. This complex is subsequently bound by UvrC and the second UvrB is released. If no lesion is found, the DNA wraps around the other UvrB subunit that will check the other stand for damage. The protein is UvrABC system protein B of Oleidesulfovibrio alaskensis (strain ATCC BAA-1058 / DSM 17464 / G20) (Desulfovibrio alaskensis).